A 222-amino-acid chain; its full sequence is Flagellar L-ring protein (222 aa).

The N-terminal stretch at 1-18 (MKTTRAIAMLGLLLGLAA) is a signal peptide. The N-palmitoyl cysteine moiety is linked to residue Cys19. Cys19 is lipidated: S-diacylglycerol cysteine.

The protein belongs to the FlgH family. In terms of assembly, the basal body constitutes a major portion of the flagellar organelle and consists of four rings (L,P,S, and M) mounted on a central rod.

It localises to the cell outer membrane. Its subcellular location is the bacterial flagellum basal body. Assembles around the rod to form the L-ring and probably protects the motor/basal body from shearing forces during rotation. The chain is Flagellar L-ring protein from Thiobacillus denitrificans (strain ATCC 25259 / T1).